Reading from the N-terminus, the 219-residue chain is Ras-related protein Rab-3B (219 aa).

Ala-2 is modified (N-acetylalanine). Residues Ser-31, Ser-32, Val-33, Gly-34, Lys-35, Thr-36, Ser-37, Pro-49, and Ser-53 each contribute to the GTP site. Thr-36 contacts Mg(2+). The short motif at 45–58 (DTFTPAFVSTVGID) is the Switch 1 element. Mg(2+) is bound by residues Thr-54 and Asp-77. The Switch 2 motif lies at 78 to 96 (TAGQERYRTITTAYYRGAM). Gly-80 lines the GTP pocket. Thr-86 bears the Phosphothreonine mark. The GTP site is built by Asn-135, Lys-136, Asp-138, Ala-166, and Lys-167. The residue at position 188 (Ser-188) is a Phosphoserine. Residues Cys-217 and Cys-219 are each lipidated (S-geranylgeranyl cysteine). Cys-219 is modified (cysteine methyl ester).

The protein belongs to the small GTPase superfamily. Rab family. As to quaternary structure, interacts with RIMS1, RIMS2, RPH3A and RPH3AL. The GTP-bound form interacts with GAS8/DRC4 (via coiled-coil domains). Interacts with GDI2, CHM and CHML; phosphorylation at Thr-86 disrupts these interactions. Interacts with MADD (via uDENN domain); the GTP-bound form is preferred for interaction. Mg(2+) serves as cofactor. Phosphorylation of Thr-86 in the switch II region by LRRK2 prevents the association of RAB regulatory proteins, including CHM, CHML and RAB GDP dissociation inhibitor GDI2.

Its subcellular location is the cell membrane. The protein localises to the golgi apparatus. The catalysed reaction is GTP + H2O = GDP + phosphate + H(+). Regulated by guanine nucleotide exchange factors (GEFs) which promote the exchange of bound GDP for free GTP. Regulated by GTPase activating proteins (GAPs) which increase the GTP hydrolysis activity. Inhibited by GDP dissociation inhibitors (GDIs) which prevent Rab-GDP dissociation. Functionally, the small GTPases Rab are key regulators of intracellular membrane trafficking, from the formation of transport vesicles to their fusion with membranes. Rabs cycle between an inactive GDP-bound form and an active GTP-bound form that is able to recruit to membranes different sets of downstream effectors directly responsible for vesicle formation, movement, tethering and fusion. The protein is Ras-related protein Rab-3B (RAB3B) of Bos taurus (Bovine).